The sequence spans 464 residues: tRNA(Ile)-lysidine synthase (464 aa).

26 to 31 (SGGPDS) is an ATP binding site.

Belongs to the tRNA(Ile)-lysidine synthase family.

It is found in the cytoplasm. It catalyses the reaction cytidine(34) in tRNA(Ile2) + L-lysine + ATP = lysidine(34) in tRNA(Ile2) + AMP + diphosphate + H(+). Its function is as follows. Ligates lysine onto the cytidine present at position 34 of the AUA codon-specific tRNA(Ile) that contains the anticodon CAU, in an ATP-dependent manner. Cytidine is converted to lysidine, thus changing the amino acid specificity of the tRNA from methionine to isoleucine. This is tRNA(Ile)-lysidine synthase from Geobacillus kaustophilus (strain HTA426).